A 305-amino-acid chain; its full sequence is MKIAVLYGGTSAEREVSLSSGKGIMEALKANGHEVIGIDFHPDQVRDLVDLDVDLVFIGLHGRLGEDGKVQALLDLLNIPYVGTGVQGSALAMDKAKAKLFFEKAGIRVAEEVVLHSFTYDANAFNFTGTYPVVVKPNQEGSTIGLTVAETEEELLQGIEEAFRHDDTILIEEFIAGTEVTVAVLGNKGEERSLPVVEIVPKNKLYDYESKYAPGMSEHIVPARISEEHTAYVQQAAVRAHQALGCDVYSRVDFIVPNDGSDPVILKVNTLPGMTPTSLYPDAAKGVGMSYEEMIQTFVNLSLKK.

In terms of domain architecture, ATP-grasp spans 99–300; it reads KLFFEKAGIR…YEEMIQTFVN (202 aa). 126-181 contacts ATP; it reads NFTGTYPVVVKPNQEGSTIGLTVAETEEELLQGIEEAFRHDDTILIEEFIAGTEVT.

The protein belongs to the D-alanine--D-alanine ligase family.

It is found in the cytoplasm. It catalyses the reaction 2 D-alanine + ATP = D-alanyl-D-alanine + ADP + phosphate + H(+). It functions in the pathway cell wall biogenesis; peptidoglycan biosynthesis. Its function is as follows. Cell wall formation. This chain is D-alanine--D-alanine ligase, found in Halalkalibacterium halodurans (strain ATCC BAA-125 / DSM 18197 / FERM 7344 / JCM 9153 / C-125) (Bacillus halodurans).